The following is an 806-amino-acid chain: Protein bimA (806 aa).

2 TPR repeats span residues 76 to 109 and 127 to 160; these read LGCSYVYAQACLDLGKYTDGINALERSKGQWTSR and AAVLCLQGKLWQAHKEHNKAVECYAAALKLNPFM. Disordered regions lie at residues 202-348, 353-372, and 401-460; these read VLPP…HRLG, TVSGQVAHPSVPHSTDQGVG, and REVK…ASSK. Residues 224–237 show a composition bias toward polar residues; that stretch reads AGTTRSDSTSTHGS. Residues 246–257 are compositionally biased toward low complexity; it reads GSTVSVASSGTG. Residues 260 to 399 are bimA domain; that stretch reads LPREGMETPG…ISSTALGVKE (140 aa). Over residues 328–348 the composition is skewed to basic and acidic residues; sequence TKFESDEGHTERDAGMGHRLG. The span at 408-421 shows a compositional bias: polar residues; sequence TTGNKARTTTSSNV. The span at 432–445 shows a compositional bias: basic and acidic residues; it reads HAGEIHDGDSKEYR. Residues 446 to 459 are compositionally biased toward low complexity; that stretch reads GTSSTSNGSQNASS. 6 TPR repeats span residues 513 to 546, 581 to 614, 616 to 648, 649 to 682, 684 to 716, and 751 to 784; these read PWVLAQIGRAYYEQAMYTEAEKYFVRVKAMAPSR, PEAWCAVGNSFSHQRDHDQALKCFKRATQLDPHF, YGFTLQGHEYVANEEYDKALDAYRSGINADSRH, YNAWYGLGTVYDKMGKLDFAEQHFRNAAKINPSN, VLICCIGLVLEKMNNPKSALIQYNRACTLAPHS, and ANVHYLLGKLYKMLRDKGNAIKHFTTALNLDPKA.

This sequence belongs to the APC3/CDC27 family.

The protein localises to the nucleus. Its function is as follows. Required for the completion of mitosis in Aspergillus nidulans. This chain is Protein bimA (bimA), found in Emericella nidulans (strain FGSC A4 / ATCC 38163 / CBS 112.46 / NRRL 194 / M139) (Aspergillus nidulans).